A 132-amino-acid chain; its full sequence is Iron-sulfur cluster assembly 1 homolog, mitochondrial (132 aa).

A mitochondrion-targeting transit peptide spans 1-15 (MASSASSVVRATVRA). Fe cation-binding residues include Cys-60, Cys-124, and Cys-126.

It belongs to the HesB/IscA family. As to quaternary structure, homooligomer, forming a rod-shaped structure 24 nm in length that may arise through a double-helical assembly of subunits. Interacts with CRY4; CRY4 seems to be associated with the outside of the rod-shaped homooligomer. Does not interact with CRY1 or CRY2. Detected in retina, especially in the retinal ganglion layer, the inner nuclear layer and the outer nuclear layer. Detected in retina visual pigment cells (at protein level).

It localises to the mitochondrion. Its function is as follows. Involved in the maturation of mitochondrial 4Fe-4S proteins functioning late in the iron-sulfur cluster assembly pathway. Probably involved in the binding of an intermediate of Fe/S cluster assembly. Component of a putative magnetoreceptor complex formed by ISCA1 and CRY4, a member of the cryptochrome family that are known to be required for light-dependent magnetosensitivity in various orgnisms. The rod-like assembly may facilitate the perception of the Earth's weak magnetic field. Both ISCA1 and the complex with CRY4 have magnetic properties and are attracted to iron beads. When exposed to a magnetic field of 1 mT (superior to the natural magnetic field), over 50% of the rod-like complexes align more or less in parallel with the magnetic field at room temperature. This Columba livia (Rock dove) protein is Iron-sulfur cluster assembly 1 homolog, mitochondrial (ISCA1).